Here is a 224-residue protein sequence, read N- to C-terminus: Ribosomal RNA small subunit methyltransferase I (224 aa).

Belongs to the methyltransferase superfamily. RsmI family.

It is found in the cytoplasm. It catalyses the reaction cytidine(1402) in 16S rRNA + S-adenosyl-L-methionine = 2'-O-methylcytidine(1402) in 16S rRNA + S-adenosyl-L-homocysteine + H(+). Catalyzes the 2'-O-methylation of the ribose of cytidine 1402 (C1402) in 16S rRNA. This chain is Ribosomal RNA small subunit methyltransferase I, found in Borrelia garinii subsp. bavariensis (strain ATCC BAA-2496 / DSM 23469 / PBi) (Borreliella bavariensis).